Consider the following 382-residue polypeptide: Chaperone protein DnaJ (382 aa).

Residues 5 to 70 (DYYETLGVSR…NKRAAYDRYG (66 aa)) enclose the J domain. The CR-type zinc-finger motif lies at 140 to 218 (GKTAQIRVPT…CHGQGRITEE (79 aa)). The Zn(2+) site is built by Cys-153, Cys-156, Cys-170, Cys-173, Cys-192, Cys-195, Cys-206, and Cys-209. 4 CXXCXGXG motif repeats span residues 153–160 (CDVCSGSG), 170–177 (CGTCQGSG), 192–199 (CPTCHGRG), and 206–213 (CGKCHGQG).

The protein belongs to the DnaJ family. Homodimer. Zn(2+) serves as cofactor.

The protein resides in the cytoplasm. In terms of biological role, participates actively in the response to hyperosmotic and heat shock by preventing the aggregation of stress-denatured proteins and by disaggregating proteins, also in an autonomous, DnaK-independent fashion. Unfolded proteins bind initially to DnaJ; upon interaction with the DnaJ-bound protein, DnaK hydrolyzes its bound ATP, resulting in the formation of a stable complex. GrpE releases ADP from DnaK; ATP binding to DnaK triggers the release of the substrate protein, thus completing the reaction cycle. Several rounds of ATP-dependent interactions between DnaJ, DnaK and GrpE are required for fully efficient folding. Also involved, together with DnaK and GrpE, in the DNA replication of plasmids through activation of initiation proteins. The polypeptide is Chaperone protein DnaJ (Rhizobium rhizogenes (strain K84 / ATCC BAA-868) (Agrobacterium radiobacter)).